Reading from the N-terminus, the 199-residue chain is Large ribosomal subunit protein uL10 (199 aa).

Belongs to the universal ribosomal protein uL10 family. Part of the ribosomal stalk of the 50S ribosomal subunit. The N-terminus interacts with L11 and the large rRNA to form the base of the stalk. The C-terminus forms an elongated spine to which L12 dimers bind in a sequential fashion forming a multimeric L10(L12)X complex.

In terms of biological role, forms part of the ribosomal stalk, playing a central role in the interaction of the ribosome with GTP-bound translation factors. The polypeptide is Large ribosomal subunit protein uL10 (rplJ) (Aquifex aeolicus (strain VF5)).